The chain runs to 439 residues: Tol-Pal system protein TolB (439 aa).

An N-terminal signal peptide occupies residues 1–22 (MKKPLRWLAALTVLLLPLSALA).

It belongs to the TolB family. As to quaternary structure, the Tol-Pal system is composed of five core proteins: the inner membrane proteins TolA, TolQ and TolR, the periplasmic protein TolB and the outer membrane protein Pal. They form a network linking the inner and outer membranes and the peptidoglycan layer.

Its subcellular location is the periplasm. Functionally, part of the Tol-Pal system, which plays a role in outer membrane invagination during cell division and is important for maintaining outer membrane integrity. The protein is Tol-Pal system protein TolB of Xanthomonas oryzae pv. oryzae (strain PXO99A).